A 290-amino-acid polypeptide reads, in one-letter code: GTPase Era (290 aa).

The 168-residue stretch at 2–169 (KSGFAAILGR…KNKIYENFSE (168 aa)) folds into the Era-type G domain. Residues 10–17 (GRPSTGKS) form a G1 region. Residue 10–17 (GRPSTGKS) participates in GTP binding. The tract at residues 36–40 (QTTRN) is G2. Positions 57 to 60 (DTPG) are G3. Residues 57–61 (DTPGF) and 119–122 (NKVD) each bind GTP. Positions 119-122 (NKVD) are G4. The tract at residues 148–150 (ISA) is G5. The region spanning 200–276 (LKEELPYSLY…NLFLQVKLKK (77 aa)) is the KH type-2 domain.

The protein belongs to the TRAFAC class TrmE-Era-EngA-EngB-Septin-like GTPase superfamily. Era GTPase family. As to quaternary structure, monomer.

The protein resides in the cytoplasm. Its subcellular location is the cell inner membrane. An essential GTPase that binds both GDP and GTP, with rapid nucleotide exchange. Plays a role in 16S rRNA processing and 30S ribosomal subunit biogenesis and possibly also in cell cycle regulation and energy metabolism. In Borrelia garinii subsp. bavariensis (strain ATCC BAA-2496 / DSM 23469 / PBi) (Borreliella bavariensis), this protein is GTPase Era.